The chain runs to 422 residues: Mannosylglycerate synthase (422 aa).

Residues 7-11 (PFKEE), Gln66, Lys77, Asp101, and 101-102 (DS) each bind GDP-alpha-D-mannose. Residues Arg132 and 137–140 (AMIT) contribute to the (R)-glycerate site. 3 residues coordinate GDP-alpha-D-mannose: Leu164, Asp193, and Tyr221.

It belongs to the glycosyltransferase 78 family.

The enzyme catalyses (R)-glycerate + GDP-alpha-D-mannose = (2R)-2-O-(alpha-D-mannosyl)-glycerate + GDP + H(+). It catalyses the reaction GDP-alpha-D-glucose + (R)-glycerate = (2R)-2-O-(alpha-D-glucopyranosyl)-glycerate + GDP + H(+). Its activity is regulated as follows. Activity is not dependent on divalent cations, but it is enhanced by Mg(2+). In terms of biological role, involved in the biosynthesis of the compatible solute alpha-D-mannosyl-glycerate (MG). Catalyzes the condensation of GDP-alpha-D-mannose (GDP-Man) with D-glycerate to produce alpha-D-mannosyl-glycerate. Can also use GDP-alpha-D-glucose (GDP-Glc) as sugar donor to produce alpha-D-glucopyranosyl-glycerate (GG). This chain is Mannosylglycerate synthase, found in Selaginella moellendorffii (Spikemoss).